The sequence spans 292 residues: MSMPATSTKTTKLATSLIDEYALLGWRAMLTEVNLSPKPGLVDRINCGAHKDMALEDFHRSALAIQGWLPRFIEFGACSAEMAPEAVLNGLRPIGMACEGDMFRATAGVNTHKGSIFSLGLLCAAIGRLLQLNQPVTPTTVCSTAASFCRGLTDRELRTNNSQLTAGQRLYQQLGLTGARGEAEAGYPLVINHALPHYLTLLDQGLDPELALLDTLLLLMATNGDTNVASRGGEGGLRWLQREAQTLLNNGGIRTPADLDYLRQFDRECIERNLSPGGSADLLIITWFLAQI.

Belongs to the CitG/MdcB family.

The enzyme catalyses 3'-dephospho-CoA + ATP = 2'-(5''-triphospho-alpha-D-ribosyl)-3'-dephospho-CoA + adenine. Functionally, catalyzes the formation of 2-(5''-triphosphoribosyl)-3'-dephosphocoenzyme-A, the precursor of the prosthetic group of the holo-acyl carrier protein (gamma chain) of citrate lyase, from ATP and dephospho-CoA. The sequence is that of 2-(5''-triphosphoribosyl)-3'-dephosphocoenzyme-A synthase from Escherichia coli (strain SMS-3-5 / SECEC).